A 374-amino-acid chain; its full sequence is SKP1-interacting partner 15 (374 aa).

One can recognise an F-box domain in the interval 3-48; sequence SSPVNCLPPDSLHQIFSSLPIRDIMICRSVCKFFNQLLTSQCFIEI.

Part of a SCF (ASK-cullin-F-box) protein ligase complex. Interacts with SKP1A/ASK1, SKP1B/ASK2, ASK11 and ASK13.

Its subcellular location is the nucleus. It functions in the pathway protein modification; protein ubiquitination. Its function is as follows. Component of SCF(ASK-cullin-F-box) E3 ubiquitin ligase complexes, which may mediate the ubiquitination and subsequent proteasomal degradation of target proteins. This Arabidopsis thaliana (Mouse-ear cress) protein is SKP1-interacting partner 15 (SKIP15).